A 131-amino-acid chain; its full sequence is PDZ domain-containing protein C52A11.3 (131 aa).

The PDZ domain occupies 51–127 (LVKLQKDANR…RLYLQIARPH (77 aa)).

This chain is PDZ domain-containing protein C52A11.3, found in Caenorhabditis elegans.